Reading from the N-terminus, the 315-residue chain is Methionyl-tRNA formyltransferase (315 aa).

113–116 (SLLP) contributes to the (6S)-5,6,7,8-tetrahydrofolate binding site.

The protein belongs to the Fmt family.

The catalysed reaction is L-methionyl-tRNA(fMet) + (6R)-10-formyltetrahydrofolate = N-formyl-L-methionyl-tRNA(fMet) + (6S)-5,6,7,8-tetrahydrofolate + H(+). In terms of biological role, attaches a formyl group to the free amino group of methionyl-tRNA(fMet). The formyl group appears to play a dual role in the initiator identity of N-formylmethionyl-tRNA by promoting its recognition by IF2 and preventing the misappropriation of this tRNA by the elongation apparatus. This is Methionyl-tRNA formyltransferase from Escherichia coli O6:K15:H31 (strain 536 / UPEC).